A 575-amino-acid chain; its full sequence is Alpha-humulene synthase (575 aa).

Positions 325, 329, 469, and 477 each coordinate Mg(2+). The DDXXD motif motif lies at 325–329 (DDLYD).

Belongs to the terpene synthase family. Tpsa subfamily. The cofactor is Mg(2+). Requires Mn(2+) as cofactor.

The enzyme catalyses (2E,6E)-farnesyl diphosphate = alpha-humulene + diphosphate. It functions in the pathway sesquiterpene biosynthesis. It participates in terpene metabolism; oleoresin biosynthesis. Terpene synthase (TPS) involved in the biosynthesis of sesquiterpene natural products included in conifer oleoresin secretions and volatile emissions; these compounds contribute to biotic and abiotic stress defense against herbivores and pathogens. Catalyzes the conversion of (2E,6E)-farnesyl diphosphate (FPP) to (1E,4E,8E)-alpha-humulene. The polypeptide is Alpha-humulene synthase (Picea glauca (White spruce)).